Reading from the N-terminus, the 512-residue chain is Maturase K (512 aa).

This sequence belongs to the intron maturase 2 family. MatK subfamily.

Its subcellular location is the plastid. It localises to the chloroplast. Usually encoded in the trnK tRNA gene intron. Probably assists in splicing its own and other chloroplast group II introns. This Lilium regale (Regal lily) protein is Maturase K.